We begin with the raw amino-acid sequence, 103 residues long: Large ribosomal subunit protein uL24 (103 aa).

It belongs to the universal ribosomal protein uL24 family. In terms of assembly, part of the 50S ribosomal subunit.

One of two assembly initiator proteins, it binds directly to the 5'-end of the 23S rRNA, where it nucleates assembly of the 50S subunit. Functionally, one of the proteins that surrounds the polypeptide exit tunnel on the outside of the subunit. The polypeptide is Large ribosomal subunit protein uL24 (Bacillus anthracis (strain A0248)).